A 199-amino-acid polypeptide reads, in one-letter code: Isopentenyl-diphosphate Delta-isomerase (199 aa).

Residues histidine 40 and histidine 47 each coordinate Mn(2+). The 142-residue stretch at 45-186 (PRHLAFSCHV…PALLSPWAVE (142 aa)) folds into the Nudix hydrolase domain. Cysteine 82 is an active-site residue. Cysteine 82 is a binding site for Mg(2+). Histidine 84 lines the Mn(2+) pocket. Glutamate 102 contributes to the Mg(2+) binding site. 2 residues coordinate Mn(2+): glutamate 131 and glutamate 133. Residue glutamate 133 is part of the active site.

It belongs to the IPP isomerase type 1 family. Mg(2+) is required as a cofactor. Mn(2+) serves as cofactor.

It localises to the cytoplasm. The catalysed reaction is isopentenyl diphosphate = dimethylallyl diphosphate. Its pathway is isoprenoid biosynthesis; dimethylallyl diphosphate biosynthesis; dimethylallyl diphosphate from isopentenyl diphosphate: step 1/1. Catalyzes the 1,3-allylic rearrangement of the homoallylic substrate isopentenyl (IPP) to its highly electrophilic allylic isomer, dimethylallyl diphosphate (DMAPP). This is Isopentenyl-diphosphate Delta-isomerase from Cutibacterium acnes (strain DSM 16379 / KPA171202) (Propionibacterium acnes).